Reading from the N-terminus, the 605-residue chain is Glucose oxidase (605 aa).

The first 18 residues, methionine 1–alanine 18, serve as a signal peptide directing secretion. The FAD site is built by leucine 52, threonine 53, and glutamate 73. N-linked (GlcNAc...) asparagine glycosylation is present at asparagine 111. Residues serine 125, asparagine 129, glycine 130, and serine 132 each coordinate FAD. Asparagine 183 and asparagine 190 each carry an N-linked (GlcNAc...) asparagine glycan. The cysteines at positions 186 and 228 are disulfide-linked. Valine 272 is a binding site for FAD. N-linked (GlcNAc...) asparagine glycans are attached at residues asparagine 335, asparagine 375, asparagine 410, and asparagine 519. Histidine 538 functions as the Proton acceptor in the catalytic mechanism. O2-binding residues include lysine 559 and valine 560. 2 residues coordinate FAD: glycine 571 and methionine 583.

Belongs to the GMC oxidoreductase family. As to quaternary structure, homodimer. It depends on FAD as a cofactor.

It localises to the secreted. The protein resides in the cell wall. Its subcellular location is the cytoplasmic vesicle. The enzyme catalyses beta-D-glucose + O2 = D-glucono-1,5-lactone + H2O2. Its function is as follows. Glucose oxidase catalyzes the oxidation of beta-D-glucose to D-glucono-delta-lactone and hydrogen peroxide in the presence of molecular oxygen. D-glucono-delta-lactone is sequentially hydrolyzed by lactonase to D-gluconic acid, and the resulting hydrogen peroxide is hydrolyzed by catalase to oxygen and water. Glucose oxidase alone indirectly causes toxicity in the presence of glucose and is the active compound of the antifungal antibiotic talaron. Responsible for inhibition of germination of microsclerotia of Verticillium dahliae. This Talaromyces flavus protein is Glucose oxidase.